The sequence spans 602 residues: Elongation factor 4 (602 aa).

Residues 2-184 (KHIRNFSIIA…AIVAKVPAPR (183 aa)) form the tr-type G domain. Residues 14 to 19 (DHGKST) and 131 to 134 (NKMD) contribute to the GTP site.

It belongs to the TRAFAC class translation factor GTPase superfamily. Classic translation factor GTPase family. LepA subfamily.

The protein localises to the cell inner membrane. It catalyses the reaction GTP + H2O = GDP + phosphate + H(+). In terms of biological role, required for accurate and efficient protein synthesis under certain stress conditions. May act as a fidelity factor of the translation reaction, by catalyzing a one-codon backward translocation of tRNAs on improperly translocated ribosomes. Back-translocation proceeds from a post-translocation (POST) complex to a pre-translocation (PRE) complex, thus giving elongation factor G a second chance to translocate the tRNAs correctly. Binds to ribosomes in a GTP-dependent manner. The chain is Elongation factor 4 from Verminephrobacter eiseniae (strain EF01-2).